A 134-amino-acid chain; its full sequence is Terepressin/terephysin (134 aa).

The first 33 residues, 1–33 (MKCSVLQMSRLSWTACVLLLPLLLLTLQGGVQG), serve as a signal peptide directing secretion. Residues C34 and C39 are joined by a disulfide bond. Positions 44–50 (KRAVDSV) are excised as a propeptide. Cystine bridges form between C56–C100, C59–C73, C67–C90, C74–C80, C107–C121, C115–C133, and C122–C127.

It belongs to the vasopressin/oxytocin family. In terms of processing, contains 7 disulfide bonds. In terms of tissue distribution, expressed by the venom duct.

The protein localises to the secreted. This Terebra anilis (Auger snail) protein is Terepressin/terephysin.